The primary structure comprises 527 residues: Bifunctional purine biosynthesis protein PurH (527 aa).

Positions 1–149 (MASDFLPVRR…KNFARVAVAT (149 aa)) constitute an MGS-like domain.

It belongs to the PurH family.

It catalyses the reaction (6R)-10-formyltetrahydrofolate + 5-amino-1-(5-phospho-beta-D-ribosyl)imidazole-4-carboxamide = 5-formamido-1-(5-phospho-D-ribosyl)imidazole-4-carboxamide + (6S)-5,6,7,8-tetrahydrofolate. It carries out the reaction IMP + H2O = 5-formamido-1-(5-phospho-D-ribosyl)imidazole-4-carboxamide. Its pathway is purine metabolism; IMP biosynthesis via de novo pathway; 5-formamido-1-(5-phospho-D-ribosyl)imidazole-4-carboxamide from 5-amino-1-(5-phospho-D-ribosyl)imidazole-4-carboxamide (10-formyl THF route): step 1/1. It functions in the pathway purine metabolism; IMP biosynthesis via de novo pathway; IMP from 5-formamido-1-(5-phospho-D-ribosyl)imidazole-4-carboxamide: step 1/1. The protein is Bifunctional purine biosynthesis protein PurH of Xanthomonas campestris pv. campestris (strain 8004).